The sequence spans 169 residues: S-ribosylhomocysteine lyase (169 aa).

Positions 54, 58, and 128 each coordinate Fe cation.

Belongs to the LuxS family. Homodimer. Fe cation serves as cofactor.

The enzyme catalyses S-(5-deoxy-D-ribos-5-yl)-L-homocysteine = (S)-4,5-dihydroxypentane-2,3-dione + L-homocysteine. In terms of biological role, involved in the synthesis of autoinducer 2 (AI-2) which is secreted by bacteria and is used to communicate both the cell density and the metabolic potential of the environment. The regulation of gene expression in response to changes in cell density is called quorum sensing. Catalyzes the transformation of S-ribosylhomocysteine (RHC) to homocysteine (HC) and 4,5-dihydroxy-2,3-pentadione (DPD). The protein is S-ribosylhomocysteine lyase of Shewanella amazonensis (strain ATCC BAA-1098 / SB2B).